A 175-amino-acid chain; its full sequence is 2-oxo-4-hydroxy-4-carboxy-5-ureidoimidazoline decarboxylase (175 aa).

The active-site Proton donor is His-67. Substrate-binding positions include Pro-68, 84–88 (SQNEQ), and 119–123 (FVICA). Positions 173 to 175 (TKL) match the Microbody targeting signal motif.

The protein belongs to the OHCU decarboxylase family.

It localises to the peroxisome. The enzyme catalyses 5-hydroxy-2-oxo-4-ureido-2,5-dihydro-1H-imidazole-5-carboxylate + H(+) = (S)-allantoin + CO2. The protein operates within purine metabolism; urate degradation; (S)-allantoin from urate: step 3/3. Catalyzes the stereoselective decarboxylation of 2-oxo-4-hydroxy-4-carboxy-5-ureidoimidazoline (OHCU) to (S)-allantoin. This chain is 2-oxo-4-hydroxy-4-carboxy-5-ureidoimidazoline decarboxylase (urad), found in Xenopus laevis (African clawed frog).